A 384-amino-acid chain; its full sequence is MPTYNEITLAKELIRFPSITPIDAGVMKFLAKKLTTIGFKCKILEFKDKNSKPVKNLYARLGNTQPNFMFAGHLDVVPPGNIQDWTIKPFSPTIKKNHLIGRGANDMKSAIASWVVAVNNYVLTNKKINGSISLLITGDEEGVAINGTKKVVDYLKKKKEKIDFCLVGEPTNPNKLGEMIKIGRRGSINAELTIIGTQGHVAYPHRAKNPSTSLIKILNEIKEIKFDKGTKDFQPTNLEVTKININNTADNVIPGLARATFNIRFNNKHTSSSLKNRLNKIFKKITKKDKSNFKVEYRVSGEAFLTKPNKTTYMIQDVIKKITKIKPQLSTTGGTSDARFIRKIAPCLEFGLVGKTMHKVDEAVSISDLKKLTKIYSEILKNYF.

His-73 contributes to the Zn(2+) binding site. Asp-75 is a catalytic residue. Position 106 (Asp-106) interacts with Zn(2+). Glu-140 serves as the catalytic Proton acceptor. Positions 141, 169, and 358 each coordinate Zn(2+).

This sequence belongs to the peptidase M20A family. DapE subfamily. Homodimer. Zn(2+) serves as cofactor. It depends on Co(2+) as a cofactor.

The enzyme catalyses N-succinyl-(2S,6S)-2,6-diaminopimelate + H2O = (2S,6S)-2,6-diaminopimelate + succinate. Its pathway is amino-acid biosynthesis; L-lysine biosynthesis via DAP pathway; LL-2,6-diaminopimelate from (S)-tetrahydrodipicolinate (succinylase route): step 3/3. Functionally, catalyzes the hydrolysis of N-succinyl-L,L-diaminopimelic acid (SDAP), forming succinate and LL-2,6-diaminopimelate (DAP), an intermediate involved in the bacterial biosynthesis of lysine and meso-diaminopimelic acid, an essential component of bacterial cell walls. This Pelagibacter ubique (strain HTCC1062) protein is Succinyl-diaminopimelate desuccinylase.